The sequence spans 771 residues: Polyribonucleotide nucleotidyltransferase (771 aa).

Residues Asp-487 and Asp-493 each coordinate Mg(2+). One can recognise a KH domain in the interval 554–613 (PRIETMQIDKAKIRDVIGTGGKVIREIVATTGAKVDIDDEGLIKISSSDLDQIEAARKWI). An S1 motif domain is found at 623-691 (GKIYDGKVVN…PRGKVRLSMR (69 aa)). A disordered region spans residues 696–771 (ETGAELEDTR…QGHVPDFLKD (76 aa)). A compositionally biased stretch (basic and acidic residues) spans 702–771 (EDTRPAREPR…QGHVPDFLKD (70 aa)).

Belongs to the polyribonucleotide nucleotidyltransferase family. Requires Mg(2+) as cofactor.

Its subcellular location is the cytoplasm. The catalysed reaction is RNA(n+1) + phosphate = RNA(n) + a ribonucleoside 5'-diphosphate. Its function is as follows. Involved in mRNA degradation. Catalyzes the phosphorolysis of single-stranded polyribonucleotides processively in the 3'- to 5'-direction. The sequence is that of Polyribonucleotide nucleotidyltransferase from Sphingopyxis alaskensis (strain DSM 13593 / LMG 18877 / RB2256) (Sphingomonas alaskensis).